A 70-amino-acid chain; its full sequence is DNA-directed RNA polymerase subunit epsilon (70 aa).

It belongs to the RNA polymerase subunit epsilon family. In terms of assembly, RNAP is composed of a core of 2 alpha, a beta and a beta' subunit. The core is associated with a delta subunit, and at least one of epsilon or omega. When a sigma factor is associated with the core the holoenzyme is formed, which can initiate transcription.

It carries out the reaction RNA(n) + a ribonucleoside 5'-triphosphate = RNA(n+1) + diphosphate. A non-essential component of RNA polymerase (RNAP). The chain is DNA-directed RNA polymerase subunit epsilon from Bacillus cereus (strain Q1).